We begin with the raw amino-acid sequence, 423 residues long: MDSLTAANNKFCFDFFREISKDDAHKNIFVCPLSLSAAFGMVRLGARGDSAHQIDEALHFNELSKDEHKEPNDPSPQSESKASDSSLEGQKQTSASQDQQGESTNDHQLLGCHFGKLLSRIDRDKSYYTLSMANRLYGEQEFPICSEYSDDVTEFFHTTVESVDFQKDSEKSRQEINFWVESQSQGKIKELFGKEAIDNSTVLVLVNAVYFKAKWEREFNSENTVDASFCLNENEKKTVKMMNQKGKFRIGFIDELQAQILEMKYAMGKLSMLVLLPSCSEDNVNSLQELEKKINHEKLLAWSSSENLSEKPVAISFPQFNLEDSYDLKSILQDMGIKDVFDETKADLTGISKSPNLYLSKIVHKTFVEVDEMGTQAAAASGVVAAEKALPSWVEFNANHPFLFFIRHNPTQSLLFCGRVYCP.

Over residues 63-72 the composition is skewed to basic and acidic residues; that stretch reads LSKDEHKEPN. The disordered stretch occupies residues 63-106; the sequence is LSKDEHKEPNDPSPQSESKASDSSLEGQKQTSASQDQQGESTND. Over residues 75–106 the composition is skewed to polar residues; the sequence is SPQSESKASDSSLEGQKQTSASQDQQGESTND.

The protein belongs to the serpin family. Ov-serpin subfamily. As to quaternary structure, interacts with SLFN12; as part of a pathway regulating cell differentiation.

The protein resides in the cytoplasm. In terms of biological role, inhibits trypsin and plasmin, but not thrombin, coagulation factor Xa, or urokinase-type plasminogen activator. May play a role in cell differentiation. The sequence is that of Serpin B12 (Serpinb12) from Mus musculus (Mouse).